Consider the following 61-residue polypeptide: Large ribosomal subunit protein eL20 (61 aa).

It belongs to the eukaryotic ribosomal protein eL20 family. In terms of assembly, part of the 50S ribosomal subunit. Binds 23S rRNA.

The protein is Large ribosomal subunit protein eL20 of Methanosarcina acetivorans (strain ATCC 35395 / DSM 2834 / JCM 12185 / C2A).